Consider the following 251-residue polypeptide: Guanine nucleotide-binding protein subunit gamma 3 (251 aa).

Over residues 1 to 10 (MSAPSGGGEG) the composition is skewed to gly residues. A disordered region spans residues 1-44 (MSAPSGGGEGGGKESAAGGVSSSSLAPSSLPPPRPKSPPEYPDL). Residues 14-28 (ESAAGGVSSSSLAPS) are compositionally biased toward low complexity. Residues 29-41 (SLPPPRPKSPPEY) show a composition bias toward pro residues. Positions 46–126 (GKRREAARVQ…LSLVSFCCCC (81 aa)) constitute a G protein gamma domain. Cysteine 248 carries the cysteine methyl ester modification. Cysteine 248 is lipidated: S-farnesyl cysteine. Positions 249-251 (LAF) are cleaved as a propeptide — removed in mature form.

G proteins are composed of 3 units, alpha, beta and gamma. Expressed in flowers and siliques.

Its function is as follows. Guanine nucleotide-binding proteins (G proteins) are involved as a modulator or transducer in various transmembrane signaling systems. The beta and gamma chains are required for the GTPase activity, for replacement of GDP by GTP, and for G protein-effector interaction. The polypeptide is Guanine nucleotide-binding protein subunit gamma 3 (GG3) (Arabidopsis thaliana (Mouse-ear cress)).